The following is a 120-amino-acid chain: T-cell receptor beta chain V region PHDS203 (120 aa).

A signal peptide spans 1-11 (VVLCFLGTGLV). The segment at 12–106 (DMKVTQMSRY…TSVYFCAQGA (95 aa)) is v segment. Cysteines 34 and 102 form a disulfide. A j segment region spans residues 107 to 120 (PEQYFGPGTRLTVL).

This is T-cell receptor beta chain V region PHDS203 from Mus musculus (Mouse).